We begin with the raw amino-acid sequence, 152 residues long: uncharacterized protein (152 aa).

A helical transmembrane segment spans residues Ala12–Phe34.

The protein to B.subtilis YfjD.

The protein localises to the membrane. This is an uncharacterized protein from Bacillus subtilis (strain 168).